The primary structure comprises 274 residues: Transcription factor MYB58 (274 aa).

2 HTH myb-type domains span residues 11 to 63 (KTKV…INYL) and 64 to 118 (RPDV…KKRL). 2 DNA-binding regions (H-T-H motif) span residues 39 to 63 (WRSLPKQAGLLRCGKSCRLRWINYL) and 91 to 114 (WSKIASKLPGRTDNEIKNVWHTHL). Disordered stretches follow at residues 121-160 (ETNLNADEAGSKGSLNEEENSQESSPNASMSFAGSNISSK) and 237-274 (SELGLEENDNQQQQQQHKQGTEDEHSSSLLESYELLIH). Residues 263–274 (SSLLESYELLIH) are compositionally biased toward low complexity.

As to expression, expressed in leaves. Specifically expressed in fibers and vessels undergoing secondary wall thickening, especially in inflorescence stems.

The protein resides in the nucleus. Its function is as follows. Transcriptional activator that binds DNA to the AC cis-elements 5'-ACCTACC-3', 5'-ACCAACC-3' and 5'-ACCTAAC-3' of promoters and specifically activates lignin biosynthetic genes during secondary wall formation mediated by SND1. The protein is Transcription factor MYB58 of Arabidopsis thaliana (Mouse-ear cress).